Here is a 528-residue protein sequence, read N- to C-terminus: Purine-cytosine permease FCY21 (528 aa).

Residues 1–90 lie on the Cytoplasmic side of the membrane; that stretch reads MPQTHEMSLN…DDSILNAASM (90 aa). Phosphoserine is present on S43. T46 bears the Phosphothreonine mark. The helical transmembrane segment at 91–111 threads the bilayer; the sequence is WFSANMVLPAYAIGALGPMVF. Topologically, residues 112-118 are extracellular; the sequence is DLNFGQS. Residues 119 to 139 form a helical membrane-spanning segment; the sequence is VFVIIFFNLLGLVSVAFFSVF. The Cytoplasmic segment spans residues 140–161; that stretch reads GAELGLRQMILSRYLVGNIAAR. A helical membrane pass occupies residues 162 to 182; that stretch reads IFSFINFIACIGWGIVNTVAS. The Extracellular segment spans residues 183-198; the sequence is SQVLNMVNPGHQCPLW. A helical membrane pass occupies residues 199 to 219; sequence AGCIVIIGATVIVTFFGYGVI. Residues 220-221 are Cytoplasmic-facing; that stretch reads HA. The chain crosses the membrane as a helical span at residues 222–242; that stretch reads YEKWAWVPNFAVFLVIIARLA. The Extracellular segment spans residues 243 to 260; the sequence is RSKKFVLGEWTSGPTTAG. The chain crosses the membrane as a helical span at residues 261–281; it reads NVLSFGSTVYGFAAGWTTYAA. Residues 282–295 lie on the Cytoplasmic side of the membrane; it reads DYTVYMPRKTNKYK. A helical membrane pass occupies residues 296–316; the sequence is IFFSLVVGLATPLYFTMILGA. Residues 317-340 lie on the Extracellular side of the membrane; that stretch reads AVAMAAIGDPAWKTYYDENSIGGL. A helical membrane pass occupies residues 341–361; the sequence is TFAVLVPNSVHGFGQFCCVLL. The Cytoplasmic portion of the chain corresponds to 362–393; that stretch reads SLSTIANNVPNMYTIALSVQATWEPLAKVPRV. Residues 394–414 form a helical membrane-spanning segment; it reads IWTLLGNAAALGIAIPACYYF. The Extracellular segment spans residues 415 to 416; it reads ST. The helical transmembrane segment at 417 to 437 threads the bilayer; it reads FMNYFMDSIGYYLAIYIAIAC. The Cytoplasmic segment spans residues 438–460; it reads SEHFIYRRSFSAYNVDDWDSWER. The chain crosses the membrane as a helical span at residues 461-481; the sequence is LPIGIAGTAALIVGAFGVALG. Topologically, residues 482 to 493 are extracellular; that stretch reads MCQTYWVGEISR. A helical transmembrane segment spans residues 494–514; sequence LIGDYGGDIGFELGLSWAFIV. Residues 515–528 lie on the Cytoplasmic side of the membrane; that stretch reads YNIARPFELKYFGR.

The protein belongs to the purine-cytosine permease (2.A.39) family.

Its subcellular location is the membrane. Probable purine-cytosine permease. In Saccharomyces cerevisiae (strain ATCC 204508 / S288c) (Baker's yeast), this protein is Purine-cytosine permease FCY21 (FCY21).